The following is a 328-amino-acid chain: Sialic acid-binding Ig-like lectin 15 (328 aa).

The first 19 residues, 1-19 (MEKSIWLLACLAWVLPTGS), serve as a signal peptide directing secretion. Topologically, residues 20–263 (FVRTKIDTTE…RFHGASGAST (244 aa)) are extracellular. One can recognise an Ig-like V-type domain in the interval 40-158 (PAQRWSMQVP…DVHDRYESRH (119 aa)). Disulfide bonds link cysteine 64–cysteine 142 and cysteine 95–cysteine 104. Arginine 143 contributes to the N-acetylneuraminate binding site. Residues 168–251 (PRIVNISVLP…SLGRSEASVY (84 aa)) form the Ig-like C2-type domain. An N-linked (GlcNAc...) asparagine glycan is attached at asparagine 172. Cysteines 187 and 237 form a disulfide. The chain crosses the membrane as a helical span at residues 264–284 (VALLLGALGFKALLLLGVLAA). The Cytoplasmic segment spans residues 285 to 328 (RAARRRPEHLDTPDTPPRSQAQESNYENLSQMNPRSPPATMCSP). The tract at residues 289-328 (RRPEHLDTPDTPPRSQAQESNYENLSQMNPRSPPATMCSP) is disordered. Polar residues predominate over residues 301–318 (PRSQAQESNYENLSQMNP).

This sequence belongs to the immunoglobulin superfamily. SIGLEC (sialic acid binding Ig-like lectin) family. As to quaternary structure, interacts with TYROBP and HCST. Expressed in macrophage and/or dendritic cells of spleen and lymph nodes.

It is found in the membrane. Binds sialylated glycoproteins. This chain is Sialic acid-binding Ig-like lectin 15 (SIGLEC15), found in Homo sapiens (Human).